Here is a 475-residue protein sequence, read N- to C-terminus: Ribulose bisphosphate carboxylase large chain (475 aa).

Positions 1 to 2 are excised as a propeptide; it reads MS. The residue at position 3 (proline 3) is an N-acetylproline. Lysine 14 carries the post-translational modification N6,N6,N6-trimethyllysine. Substrate contacts are provided by asparagine 123 and threonine 173. The Proton acceptor role is filled by lysine 175. Lysine 177 provides a ligand contact to substrate. Residues lysine 201, aspartate 203, and glutamate 204 each coordinate Mg(2+). Position 201 is an N6-carboxylysine (lysine 201). Histidine 294 acts as the Proton acceptor in catalysis. The substrate site is built by arginine 295, histidine 327, and serine 379.

The protein belongs to the RuBisCO large chain family. Type I subfamily. As to quaternary structure, heterohexadecamer of 8 large chains and 8 small chains; disulfide-linked. The disulfide link is formed within the large subunit homodimers. The cofactor is Mg(2+). The disulfide bond which can form in the large chain dimeric partners within the hexadecamer appears to be associated with oxidative stress and protein turnover.

It is found in the plastid. Its subcellular location is the chloroplast. The enzyme catalyses 2 (2R)-3-phosphoglycerate + 2 H(+) = D-ribulose 1,5-bisphosphate + CO2 + H2O. The catalysed reaction is D-ribulose 1,5-bisphosphate + O2 = 2-phosphoglycolate + (2R)-3-phosphoglycerate + 2 H(+). In terms of biological role, ruBisCO catalyzes two reactions: the carboxylation of D-ribulose 1,5-bisphosphate, the primary event in carbon dioxide fixation, as well as the oxidative fragmentation of the pentose substrate in the photorespiration process. Both reactions occur simultaneously and in competition at the same active site. In Ostrya virginiana (American hophornbeam), this protein is Ribulose bisphosphate carboxylase large chain.